A 319-amino-acid polypeptide reads, in one-letter code: Malate dehydrogenase (319 aa).

NAD(+)-binding positions include G11 to G16 and D36. 2 residues coordinate substrate: R85 and R91. NAD(+)-binding positions include N98 and V121–N123. The substrate site is built by N123 and R154. H178 acts as the Proton acceptor in catalysis.

Belongs to the LDH/MDH superfamily. MDH type 3 family.

The catalysed reaction is (S)-malate + NAD(+) = oxaloacetate + NADH + H(+). Catalyzes the reversible oxidation of malate to oxaloacetate. The polypeptide is Malate dehydrogenase (Sulfurimonas denitrificans (strain ATCC 33889 / DSM 1251) (Thiomicrospira denitrificans (strain ATCC 33889 / DSM 1251))).